Reading from the N-terminus, the 229-residue chain is Cytochrome c oxidase subunit 2 (229 aa).

The Mitochondrial intermembrane segment spans residues Met-1–Tyr-26. The helical transmembrane segment at Thr-27–Ser-48 threads the bilayer. Over Ser-49–Glu-62 the chain is Mitochondrial matrix. Residues Thr-63–Gln-82 form a helical membrane-spanning segment. Residues Leu-83 to Glu-229 lie on the Mitochondrial intermembrane side of the membrane. The Cu cation site is built by His-161, Cys-196, Glu-198, Cys-200, His-204, and Met-207. Residue Glu-198 coordinates Mg(2+).

It belongs to the cytochrome c oxidase subunit 2 family. As to quaternary structure, component of the cytochrome c oxidase (complex IV, CIV), a multisubunit enzyme composed of a catalytic core of 3 subunits and several supernumerary subunits. The complex exists as a monomer or a dimer and forms supercomplexes (SCs) in the inner mitochondrial membrane with ubiquinol-cytochrome c oxidoreductase (cytochrome b-c1 complex, complex III, CIII). The cofactor is Cu cation.

The protein resides in the mitochondrion inner membrane. The catalysed reaction is 4 Fe(II)-[cytochrome c] + O2 + 8 H(+)(in) = 4 Fe(III)-[cytochrome c] + 2 H2O + 4 H(+)(out). Its function is as follows. Component of the cytochrome c oxidase, the last enzyme in the mitochondrial electron transport chain which drives oxidative phosphorylation. The respiratory chain contains 3 multisubunit complexes succinate dehydrogenase (complex II, CII), ubiquinol-cytochrome c oxidoreductase (cytochrome b-c1 complex, complex III, CIII) and cytochrome c oxidase (complex IV, CIV), that cooperate to transfer electrons derived from NADH and succinate to molecular oxygen, creating an electrochemical gradient over the inner membrane that drives transmembrane transport and the ATP synthase. Cytochrome c oxidase is the component of the respiratory chain that catalyzes the reduction of oxygen to water. Electrons originating from reduced cytochrome c in the intermembrane space (IMS) are transferred via the dinuclear copper A center (CU(A)) of subunit 2 and heme A of subunit 1 to the active site in subunit 1, a binuclear center (BNC) formed by heme A3 and copper B (CU(B)). The BNC reduces molecular oxygen to 2 water molecules using 4 electrons from cytochrome c in the IMS and 4 protons from the mitochondrial matrix. The sequence is that of Cytochrome c oxidase subunit 2 (COII) from Pisaster ochraceus (Ochre sea star).